Here is a 409-residue protein sequence, read N- to C-terminus: Peptidase T (409 aa).

Residue His-78 participates in Zn(2+) binding. Residue Asp-80 is part of the active site. Zn(2+) is bound at residue Asp-140. Glu-173 functions as the Proton acceptor in the catalytic mechanism. Zn(2+) contacts are provided by Glu-174, Asp-196, and His-379.

It belongs to the peptidase M20B family. Zn(2+) is required as a cofactor.

It is found in the cytoplasm. It catalyses the reaction Release of the N-terminal residue from a tripeptide.. In terms of biological role, cleaves the N-terminal amino acid of tripeptides. The chain is Peptidase T from Salmonella heidelberg (strain SL476).